We begin with the raw amino-acid sequence, 429 residues long: Ribosomal RNA small subunit methyltransferase B (429 aa).

Residues 254–260 (CAAPGGK), Asp277, Asp303, and Asp322 contribute to the S-adenosyl-L-methionine site. The active-site Nucleophile is the Cys375.

This sequence belongs to the class I-like SAM-binding methyltransferase superfamily. RsmB/NOP family.

It localises to the cytoplasm. The enzyme catalyses cytidine(967) in 16S rRNA + S-adenosyl-L-methionine = 5-methylcytidine(967) in 16S rRNA + S-adenosyl-L-homocysteine + H(+). Its function is as follows. Specifically methylates the cytosine at position 967 (m5C967) of 16S rRNA. This chain is Ribosomal RNA small subunit methyltransferase B, found in Shigella flexneri.